The sequence spans 65 residues: Large ribosomal subunit protein bL35 (65 aa).

This sequence belongs to the bacterial ribosomal protein bL35 family.

This chain is Large ribosomal subunit protein bL35, found in Nitrosomonas europaea (strain ATCC 19718 / CIP 103999 / KCTC 2705 / NBRC 14298).